The primary structure comprises 182 residues: CDP-diacylglycerol--glycerol-3-phosphate 3-phosphatidyltransferase (182 aa).

Residues 2–12 (QFNIPTLLTLF) lie on the Cytoplasmic side of the membrane. The helical transmembrane segment at 13 to 37 (RVILIPFLVVVFYLPFAWAPMVSAL) threads the bilayer. Over 38–60 (IFCIAAITDWFDGFLARRWNQST) the chain is Periplasmic. A helical membrane pass occupies residues 61–81 (RFGAFLDPVADKVLVAIAMVL). Topologically, residues 82 to 86 (VTEHY) are cytoplasmic. Residues 87–107 (HSWWVTLPAATMIAREIIISA) form a helical membrane-spanning segment. The Periplasmic segment spans residues 108-145 (LREWMAELGKRSSVAVSWIGKVKTTAQMVALAWLLWRP). Residues 146-168 (NIWVEYAGIALFFVAAVLTLWSM) form a helical membrane-spanning segment. Residues 169-181 (LQYLSAARGDLLD) lie on the Cytoplasmic side of the membrane.

The protein belongs to the CDP-alcohol phosphatidyltransferase class-I family.

Its subcellular location is the cell inner membrane. It carries out the reaction a CDP-1,2-diacyl-sn-glycerol + sn-glycerol 3-phosphate = a 1,2-diacyl-sn-glycero-3-phospho-(1'-sn-glycero-3'-phosphate) + CMP + H(+). It participates in phospholipid metabolism; phosphatidylglycerol biosynthesis; phosphatidylglycerol from CDP-diacylglycerol: step 1/2. Functionally, catalyzes the conversion of cytidine diphosphate diacylglycerol (CDP-DG) and glycerol 3-phosphate into phosphatidylglycerol. Essential for the synthesis of anionic phospholipids, thereby playing a role in balancing the ratio of zwitterionic and anionic phospholipids, which is thought to be important for normal membrane function. The polypeptide is CDP-diacylglycerol--glycerol-3-phosphate 3-phosphatidyltransferase (Salmonella choleraesuis (strain SC-B67)).